We begin with the raw amino-acid sequence, 288 residues long: Serine/threonine-protein acetyltransferase YopJ (288 aa).

Active-site residues include H109 and E128. H109 is a binding site for CoA. Position 167 to 168 (167 to 168 (RS)) interacts with CoA. C172 is an active-site residue. Residues 182 to 185 (KLYI) and 224 to 225 (KH) each bind 1D-myo-inositol hexakisphosphate. 227–230 (QGKK) provides a ligand contact to CoA. R257 contributes to the 1D-myo-inositol hexakisphosphate binding site. 266-270 (DGKEL) provides a ligand contact to CoA.

The protein belongs to the acetyltransferase YopJ family. The cofactor is 1D-myo-inositol hexakisphosphate.

The protein localises to the secreted. It carries out the reaction L-threonyl-[protein] + acetyl-CoA = O-acetyl-L-threonyl-[protein] + CoA. It catalyses the reaction L-seryl-[protein] + acetyl-CoA = O-acetyl-L-seryl-[protein] + CoA. With respect to regulation, 1D-myo-inositol hexakisphosphate activates protein-acetyltransferase activity via an allosteric mechanism: 1D-myo-inositol hexakisphosphate-binding induces a conformational rearrangement that stimulates the interaction with acetyl-CoA. In terms of biological role, serine/threonine-protein acetyltransferase translocated into infected cells, which inhibits the host immune response and induces cell death by mediating acetylation of target proteins. Inhibits the MAPK and NF-kappa-B signaling pathways by acetylating protein-kinases such as MAP2K1, MAP2K6, MAP3K7/TAK1 and I-kappa-B kinase (CHUK/IKKA and IKBKB) on serine and threonine residues critical for their activation by phosphorylation, thereby preventing protein-kinase activation. Promotes pyroptosis, a programmed cell death, in host cells by mediating acetylation of MAP3K7/TAK1: MAP3K7/TAK1 inactivation triggers activation of caspase-8 (CASP8), followed by CASP8-dependent cleavage of gasdermin-D (GSDMD) and induction of pyroptosis. This Yersinia pestis protein is Serine/threonine-protein acetyltransferase YopJ.